Consider the following 351-residue polypeptide: Biotin synthase (351 aa).

The Radical SAM core domain maps to 48–265 (NKVRIHILDN…LCMFRLINPD (218 aa)). Cys-63, Cys-67, and Cys-70 together coordinate [4Fe-4S] cluster. [2Fe-2S] cluster-binding residues include Cys-107, Cys-139, Cys-199, and Arg-269.

The protein belongs to the radical SAM superfamily. Biotin synthase family. In terms of assembly, homodimer. Requires [4Fe-4S] cluster as cofactor. [2Fe-2S] cluster is required as a cofactor.

It carries out the reaction (4R,5S)-dethiobiotin + (sulfur carrier)-SH + 2 reduced [2Fe-2S]-[ferredoxin] + 2 S-adenosyl-L-methionine = (sulfur carrier)-H + biotin + 2 5'-deoxyadenosine + 2 L-methionine + 2 oxidized [2Fe-2S]-[ferredoxin]. The protein operates within cofactor biosynthesis; biotin biosynthesis; biotin from 7,8-diaminononanoate: step 2/2. Functionally, catalyzes the conversion of dethiobiotin (DTB) to biotin by the insertion of a sulfur atom into dethiobiotin via a radical-based mechanism. In Leptospira interrogans serogroup Icterohaemorrhagiae serovar copenhageni (strain Fiocruz L1-130), this protein is Biotin synthase.